The sequence spans 415 residues: Adipocyte plasma membrane-associated protein (415 aa).

Residues 1–39 lie on the Cytoplasmic side of the membrane; the sequence is MNEPEGLRFRRLNRPHIITDETHEPQYKATSTYSGKVFR. The chain crosses the membrane as a helical span at residues 40-60; the sequence is VTLLTMVAFLLLPLLVVVFVL. The Extracellular portion of the chain corresponds to 61–412; sequence ESPIQPEVFS…RSPYLCKLDL (352 aa). Asn159 carries N-linked (GlcNAc...) asparagine glycosylation.

The protein belongs to the strictosidine synthase family.

The protein localises to the membrane. This Danio rerio (Zebrafish) protein is Adipocyte plasma membrane-associated protein (apmap).